The following is a 186-amino-acid chain: Putative glutathione-dependent formaldehyde-activating enzyme (186 aa).

Positions 20–166 constitute a CENP-V/GFA domain; that stretch reads FSGGKLRCKC…FKSIGLETYD (147 aa). Zn(2+) is bound by residues C27, C29, C48, C50, C53, C95, and C98.

It belongs to the Gfa family. Requires Zn(2+) as cofactor.

The enzyme catalyses S-(hydroxymethyl)glutathione = glutathione + formaldehyde. Its pathway is one-carbon metabolism; formaldehyde degradation; formate from formaldehyde (glutathione route): step 1/3. Catalyzes the condensation of formaldehyde and glutathione to S-hydroxymethylglutathione. The polypeptide is Putative glutathione-dependent formaldehyde-activating enzyme (Fusarium vanettenii (strain ATCC MYA-4622 / CBS 123669 / FGSC 9596 / NRRL 45880 / 77-13-4) (Fusarium solani subsp. pisi)).